We begin with the raw amino-acid sequence, 308 residues long: tRNA pseudouridine synthase B (308 aa).

The Nucleophile role is filled by aspartate 51.

It belongs to the pseudouridine synthase TruB family. Type 1 subfamily.

It catalyses the reaction uridine(55) in tRNA = pseudouridine(55) in tRNA. In terms of biological role, responsible for synthesis of pseudouridine from uracil-55 in the psi GC loop of transfer RNAs. This chain is tRNA pseudouridine synthase B, found in Aromatoleum aromaticum (strain DSM 19018 / LMG 30748 / EbN1) (Azoarcus sp. (strain EbN1)).